A 150-amino-acid chain; its full sequence is Seminal ribonuclease (150 aa).

Positions 1–26 are cleaved as a signal peptide; that stretch reads MALKSLVVLPLLVLVLLLVRVQPSLG. Substrate-binding residues include Lys33 and Arg36. The active-site Proton acceptor is His38. 4 cysteine pairs are disulfide-bonded: Cys52–Cys110, Cys66–Cys121, Cys84–Cys136, and Cys91–Cys98. Substrate is bound by residues 67–71 and Lys92; that span reads KPVNT. Residue Asn93 is modified to Deamidated asparagine; by deterioration. Residue Arg111 participates in substrate binding. His145 (proton donor) is an active-site residue.

This sequence belongs to the pancreatic ribonuclease family. As to quaternary structure, homodimer; disulfide-linked. In terms of tissue distribution, seminal plasma. Can reach 3% of the protein content of this fluid.

It is found in the secreted. It catalyses the reaction an [RNA] containing cytidine + H2O = an [RNA]-3'-cytidine-3'-phosphate + a 5'-hydroxy-ribonucleotide-3'-[RNA].. The catalysed reaction is an [RNA] containing uridine + H2O = an [RNA]-3'-uridine-3'-phosphate + a 5'-hydroxy-ribonucleotide-3'-[RNA].. Its activity is regulated as follows. Allosteric regulation by both substrate and reaction products. This enzyme hydrolyzes both single- and double-stranded RNA. In Bos taurus (Bovine), this protein is Seminal ribonuclease (SRN).